The primary structure comprises 171 residues: uncharacterized protein (171 aa).

In terms of domain architecture, PfpI endopeptidase spans 3–171; that stretch reads KKVAIILANE…FNREIVKQLQ (169 aa).

This sequence belongs to the peptidase C56 family.

This is an uncharacterized protein from Staphylococcus aureus (strain MRSA252).